The following is a 358-amino-acid chain: Uroporphyrinogen decarboxylase (358 aa).

Residues 29–33, F48, D79, Y155, S210, and H330 contribute to the substrate site; that span reads RQAGR.

This sequence belongs to the uroporphyrinogen decarboxylase family. Homodimer.

It localises to the cytoplasm. The catalysed reaction is uroporphyrinogen III + 4 H(+) = coproporphyrinogen III + 4 CO2. It participates in porphyrin-containing compound metabolism; protoporphyrin-IX biosynthesis; coproporphyrinogen-III from 5-aminolevulinate: step 4/4. Functionally, catalyzes the decarboxylation of four acetate groups of uroporphyrinogen-III to yield coproporphyrinogen-III. The polypeptide is Uroporphyrinogen decarboxylase (Bordetella parapertussis (strain 12822 / ATCC BAA-587 / NCTC 13253)).